Here is an 823-residue protein sequence, read N- to C-terminus: Leucine--tRNA ligase (823 aa).

The 'HIGH' region signature appears at 41–51 (PYPSGTLHVGH). The 'KMSKS' region signature appears at 580 to 584 (KMSKS). Lys583 provides a ligand contact to ATP.

The protein belongs to the class-I aminoacyl-tRNA synthetase family.

Its subcellular location is the cytoplasm. The enzyme catalyses tRNA(Leu) + L-leucine + ATP = L-leucyl-tRNA(Leu) + AMP + diphosphate. This chain is Leucine--tRNA ligase, found in Thermosipho melanesiensis (strain DSM 12029 / CIP 104789 / BI429).